Reading from the N-terminus, the 581-residue chain is Aspartate--tRNA ligase (581 aa).

Glu170 provides a ligand contact to L-aspartate. The segment at 194–197 (QLFK) is aspartate. An L-aspartate-binding site is contributed by Arg216. ATP contacts are provided by residues 216-218 (RDE) and Gln225. His439 contributes to the L-aspartate binding site. Glu468 lines the ATP pocket. L-aspartate is bound at residue Arg475. 520–523 (GFDR) is a binding site for ATP.

Belongs to the class-II aminoacyl-tRNA synthetase family. Type 1 subfamily. As to quaternary structure, homodimer.

It localises to the cytoplasm. The catalysed reaction is tRNA(Asp) + L-aspartate + ATP = L-aspartyl-tRNA(Asp) + AMP + diphosphate. In terms of biological role, catalyzes the attachment of L-aspartate to tRNA(Asp) in a two-step reaction: L-aspartate is first activated by ATP to form Asp-AMP and then transferred to the acceptor end of tRNA(Asp). This Thermosipho melanesiensis (strain DSM 12029 / CIP 104789 / BI429) protein is Aspartate--tRNA ligase.